The sequence spans 327 residues: GDP-mannose transporter (327 aa).

Over 1 to 4 (MESS) the chain is Cytoplasmic. Residues 5-25 (LAAIANSGPISIFSYCVSSIL) form a helical membrane-spanning segment. Topologically, residues 26–36 (MTVTNKYVLSG) are lumenal. Residues 37–57 (FSFNMNFLLLAVQSIVCIVTI) traverse the membrane as a helical segment. At 58 to 78 (GSLKSFGVITYRQFNKEEARK) the chain is on the cytoplasmic side. Residues 79-93 (WSPIAVLLVIMIYTS) traverse the membrane as a helical segment. At 94 to 102 (SKALQYLSI) the chain is on the lumenal side. A helical transmembrane segment spans residues 103 to 125 (PVYTIFKNLTIILIAYGEVLWFG). Topologically, residues 126 to 131 (GKVTTM) are cytoplasmic. A helical membrane pass occupies residues 132-149 (ALSSFLLMVFSSVVAWYG). The Lumenal segment spans residues 150 to 163 (DEAVSGSGNESFIA). Residue N158 is glycosylated (N-linked (GlcNAc...) asparagine). The chain crosses the membrane as a helical span at residues 164–184 (LYLGYFWMATNCFASAAFVLI). Topologically, residues 185–207 (MRKRIKLTNFKDFDTMYYNNLLS) are cytoplasmic. The helical transmembrane segment at 208–228 (IPILLASSIIFEDWSAENLAV) threads the bilayer. Residues 229-238 (NFPSDNRTAT) lie on the Lumenal side of the membrane. N234 is a glycosylation site (N-linked (GlcNAc...) asparagine). Residues 239–259 (IAAMVLSGASSVGISYCSAWC) traverse the membrane as a helical segment. Over 260–266 (VRVTSST) the chain is Cytoplasmic. A helical membrane pass occupies residues 267 to 289 (TYSMVGALNKLPIALSGLVFFPA). The Lumenal portion of the chain corresponds to 290–292 (AVN). A helical membrane pass occupies residues 293–312 (FWSVASIFVGFAAGLVYAVA). Residues 313-327 (KQRQQKENVSLPSSK) lie on the Cytoplasmic side of the membrane.

It belongs to the TPT transporter family. SLC35D subfamily. As to quaternary structure, homooligomer.

The protein localises to the golgi apparatus membrane. It localises to the cytoplasmic vesicle membrane. Its subcellular location is the endoplasmic reticulum membrane. Functionally, involved in the import of GDP-mannose from the cytoplasm into the Golgi lumen. The polypeptide is GDP-mannose transporter (VRG4) (Scheffersomyces stipitis (strain ATCC 58785 / CBS 6054 / NBRC 10063 / NRRL Y-11545) (Yeast)).